The chain runs to 386 residues: MYNFVTLSILGAYLHTITLILLAAGSSSRFELDIKKQWLRVGDRPLWHFVADRCEKTGYFDKIIITSSLDDIEFMKNYADYTFVEGGQTRQQSLKNSLLHVDTEYVLVSDVARSCIDEAFLKKIISHVGKSDAVVPYLNITDTIVYDDKTIDRERVKRVQTPQLSLTTALKSALLREEEFTDESSAIVANGGSREFILGQESAHKITHIEDLKKLSCLSAPSSDTLSGVGFDVHAFDDKGEMFLGGIKIDSEYGFLAHSDGDVAIHALIDALLGAAGMGDIGMMFPDNDVKYKGADSKELLGTLVTKLRHFGFVIVNVDITIAAEKPRIGNYKMAMRKKISSILGIDAQRVNIKATTTEKLGFIGRGEGVGVIANANLKYFDWTKI.

Positions M1–T225 are 2-C-methyl-D-erythritol 4-phosphate cytidylyltransferase. Residues L226 to I386 are 2-C-methyl-D-erythritol 2,4-cyclodiphosphate synthase. A divalent metal cation is bound by residues D232 and H234. 4-CDP-2-C-methyl-D-erythritol 2-phosphate contacts are provided by residues D232–H234 and H258–S259. H266 contacts a divalent metal cation. Residues D280–G282, F285–D289, T356–E359, F363, and R366 contribute to the 4-CDP-2-C-methyl-D-erythritol 2-phosphate site.

It in the N-terminal section; belongs to the IspD/TarI cytidylyltransferase family. IspD subfamily. This sequence in the C-terminal section; belongs to the IspF family. It depends on a divalent metal cation as a cofactor.

The enzyme catalyses 2-C-methyl-D-erythritol 4-phosphate + CTP + H(+) = 4-CDP-2-C-methyl-D-erythritol + diphosphate. It carries out the reaction 4-CDP-2-C-methyl-D-erythritol 2-phosphate = 2-C-methyl-D-erythritol 2,4-cyclic diphosphate + CMP. It participates in isoprenoid biosynthesis; isopentenyl diphosphate biosynthesis via DXP pathway; isopentenyl diphosphate from 1-deoxy-D-xylulose 5-phosphate: step 2/6. It functions in the pathway isoprenoid biosynthesis; isopentenyl diphosphate biosynthesis via DXP pathway; isopentenyl diphosphate from 1-deoxy-D-xylulose 5-phosphate: step 4/6. Functionally, bifunctional enzyme that catalyzes the formation of 4-diphosphocytidyl-2-C-methyl-D-erythritol from CTP and 2-C-methyl-D-erythritol 4-phosphate (MEP) (IspD), and catalyzes the conversion of 4-diphosphocytidyl-2-C-methyl-D-erythritol 2-phosphate (CDP-ME2P) to 2-C-methyl-D-erythritol 2,4-cyclodiphosphate (ME-CPP) with a corresponding release of cytidine 5-monophosphate (CMP) (IspF). The protein is Bifunctional enzyme IspD/IspF of Sulfurimonas denitrificans (strain ATCC 33889 / DSM 1251) (Thiomicrospira denitrificans (strain ATCC 33889 / DSM 1251)).